The chain runs to 337 residues: D-alanine--D-alanine ligase (337 aa).

The 201-residue stretch at 126-326 (KQIWISNGLS…YADLVLWLLS (201 aa)) folds into the ATP-grasp domain. 152–207 (VKHLGLPLIVKPAHEGSSLGLTKVKSVEELPAAYQLAAGLDKKVIAETCIVGDELT) contributes to the ATP binding site. The Mg(2+) site is built by Asp279, Glu293, and Asn295.

This sequence belongs to the D-alanine--D-alanine ligase family. Mg(2+) is required as a cofactor. Requires Mn(2+) as cofactor.

It localises to the cytoplasm. It catalyses the reaction 2 D-alanine + ATP = D-alanyl-D-alanine + ADP + phosphate + H(+). The protein operates within cell wall biogenesis; peptidoglycan biosynthesis. Its function is as follows. Cell wall formation. This chain is D-alanine--D-alanine ligase, found in Polynucleobacter asymbioticus (strain DSM 18221 / CIP 109841 / QLW-P1DMWA-1) (Polynucleobacter necessarius subsp. asymbioticus).